The chain runs to 506 residues: Putative transporter SVOPL (506 aa).

Helical transmembrane passes span 57–77 (SIGFGCFHILLFVIMGSANIV), 104–124 (ALVSTMVFFGFMVCGVLCGYI), 133–153 (VVFGGFVWASYFSFLTSFSTS), 190–210 (LLPLASIFWMMGSILIIVLGM), 220–240 (WMIRFSVIPSLVLIGLFMFIP), 297–317 (TSLLLWYSWFVASFSYYGSVL), 362–382 (LISCLGEVALIPLNIILLNIV), 397–417 (FFFMLVNICTTMLGFTILLFL), 444–464 (IGMGFCTSFSRIGGMIAPFIA), and 472–492 (VILALSPFATACIICAIGVFF).

The protein belongs to the major facilitator superfamily.

It is found in the membrane. The protein is Putative transporter SVOPL (svopl) of Danio rerio (Zebrafish).